Consider the following 800-residue polypeptide: Putative antiporter subunit mnhA2 (800 aa).

20 consecutive transmembrane segments (helical) span residues methionine 1 to serine 21, isoleucine 33 to alanine 53, glycine 78 to alanine 98, leucine 118 to phenylalanine 138, phenylalanine 167 to methionine 187, glycine 207 to phenylalanine 227, threonine 241 to leucine 261, tyrosine 273 to leucine 293, glycine 300 to glycine 320, isoleucine 331 to isoleucine 351, leucine 387 to serine 407, phenylalanine 424 to phenylalanine 444, proline 472 to valine 492, glycine 527 to isoleucine 547, isoleucine 595 to leucine 615, glycine 627 to isoleucine 647, leucine 651 to methionine 671, leucine 676 to serine 696, isoleucine 712 to threonine 732, and leucine 768 to leucine 788.

The protein belongs to the CPA3 antiporters (TC 2.A.63) subunit A family. In terms of assembly, may form a heterooligomeric complex that consists of seven subunits: mnhA2, mnhB2, mnhC2, mnhD2, mnhE2, mnhF2 and mnhG2.

The protein localises to the cell membrane. This chain is Putative antiporter subunit mnhA2 (mnhA2), found in Staphylococcus aureus (strain MSSA476).